Consider the following 258-residue polypeptide: 14-3-3-like protein F (258 aa).

Belongs to the 14-3-3 family.

The polypeptide is 14-3-3-like protein F (Nicotiana tabacum (Common tobacco)).